The chain runs to 383 residues: MPDSIPANSVGLVTPQLMQFDEPLALACGRTLDSYQLMVETYGTLNASRTNALLICHALSGHHHAAGYHSMDERKPGWWDAYIGPGKPLDTNKFFIVSLNNIGGCHGSTGPVTPNPSTGQPWGGDFPTLRVRDWVHSQARLADALGIQKWAAVVGGSLGGMQAMRWSLEYPDRVGHCVVIASAMKLSAQNIAFNHAAREAILTDPDFHDGNFLSHSTVPKRGLSTARVIAHLTYLSDDGMGQKFGRELRSGSFEQGTEEPVEFQIESYLRYQADSFSKVFDANTYVLMTRALDYFDLAREYGDDPVEAFKQAQCKYMVISFTSDWRFSPERSREIVNALIRADRDVVYGELESDFGHDAFLIPNQPRYWDLLTSYMSQIEVAD.

The region spanning 51-361 (NALLICHALS…ESDFGHDAFL (311 aa)) is the AB hydrolase-1 domain. Catalysis depends on serine 157, which acts as the Nucleophile. Substrate is bound at residue arginine 227. Active-site residues include aspartate 324 and histidine 357. Aspartate 358 provides a ligand contact to substrate.

Belongs to the AB hydrolase superfamily. MetX family. As to quaternary structure, homodimer.

The protein localises to the cytoplasm. The enzyme catalyses L-homoserine + succinyl-CoA = O-succinyl-L-homoserine + CoA. Its pathway is amino-acid biosynthesis; L-methionine biosynthesis via de novo pathway; O-succinyl-L-homoserine from L-homoserine: step 1/1. Its function is as follows. Transfers a succinyl group from succinyl-CoA to L-homoserine, forming succinyl-L-homoserine. This is Homoserine O-succinyltransferase from Teredinibacter turnerae (strain ATCC 39867 / T7901).